A 431-amino-acid chain; its full sequence is Urokinase-type plasminogen activator (431 aa).

The first 20 residues, M1 to G20, serve as a signal peptide directing secretion. The 37-residue stretch at V27–E63 folds into the EGF-like domain. 6 disulfide bridges follow: C31–C39, C33–C51, C53–C62, C70–C151, C91–C133, and C122–C146. The binds urokinase plasminogen activator surface receptor stretch occupies residues L34–F57. O-linked (Fuc) threonine glycosylation occurs at T38. The region spanning C70–C151 is the Kringle domain. The interval A152–F177 is connecting peptide. Phosphoserine is present on S158. Cystine bridges form between C168–C299, C209–C225, C217–C288, C313–C382, C345–C361, and C372–C400. One can recognise a Peptidase S1 domain in the interval I179–K424. Catalysis depends on charge relay system residues H224 and D275. N322 carries N-linked (GlcNAc...) asparagine glycosylation. S323 bears the Phosphoserine mark. The Charge relay system role is filled by S376.

This sequence belongs to the peptidase S1 family. Found in high and low molecular mass forms. Each consists of two chains, A and B. The high molecular mass form contains a long chain A which is cleaved to yield a short chain A. Forms heterodimer with SERPINA5. Binds LRP1B; binding is followed by internalization and degradation. Interacts with MRC2. Interacts with PLAUR. In complex with SERPINE1, interacts with PLAUR/uPAR. Interacts with SORL1 and LRP1, either alone or in complex with SERPINE1; these interactions are abolished in the presence of LRPAP1/RAP. The ternary complex composed of PLAUR-PLAU-PAI1 also interacts with SORLA. Post-translationally, phosphorylation of Ser-158 and Ser-323 abolishes proadhesive ability but does not interfere with receptor binding. In terms of processing, produced as an inactive single-chain protein (pro-uPA or sc-uPA), is processed into the active disulfide-linked two-chain form of PLAU/uPA by a proteolytic event mediated, at least, by TMPRSS4. As to expression, expressed in the prostate gland and prostate cancers.

Its subcellular location is the secreted. The enzyme catalyses Specific cleavage of Arg-|-Val bond in plasminogen to form plasmin.. Its activity is regulated as follows. Inhibited by SERPINA5. Inhibited by SERPINE1. In terms of biological role, specifically cleaves the zymogen plasminogen to form the active enzyme plasmin. This chain is Urokinase-type plasminogen activator, found in Homo sapiens (Human).